The following is a 248-amino-acid chain: Probable transcriptional regulatory protein Syncc9902_0542 (248 aa).

It belongs to the TACO1 family.

It is found in the cytoplasm. This Synechococcus sp. (strain CC9902) protein is Probable transcriptional regulatory protein Syncc9902_0542.